The chain runs to 354 residues: Inactive ADP-ribosyltransferase ARH2 (354 aa).

Position 27 is a phosphoserine (Ser27).

Belongs to the ADP-ribosylglycohydrolase family.

The protein localises to the cytoplasm. Its subcellular location is the myofibril. The protein resides in the sarcomere. Required for myofibril assembly and outgrowth of the cardiac chambers in the developing heart. Appears to be catalytically inactive, showing no activity against O-acetyl-ADP-ribose. This Pongo abelii (Sumatran orangutan) protein is Inactive ADP-ribosyltransferase ARH2 (ADPRHL1).